The primary structure comprises 48 residues: DNA-directed RNA polymerase subunit Rpo12 (48 aa).

Zn(2+) contacts are provided by Cys9, Cys26, and Cys29.

Belongs to the archaeal Rpo12/eukaryotic RPC10 RNA polymerase subunit family. In terms of assembly, part of the RNA polymerase complex. It depends on Zn(2+) as a cofactor.

The protein resides in the cytoplasm. It carries out the reaction RNA(n) + a ribonucleoside 5'-triphosphate = RNA(n+1) + diphosphate. DNA-dependent RNA polymerase (RNAP) catalyzes the transcription of DNA into RNA using the four ribonucleoside triphosphates as substrates. The sequence is that of DNA-directed RNA polymerase subunit Rpo12 from Saccharolobus islandicus (strain Y.N.15.51 / Yellowstone #2) (Sulfolobus islandicus).